We begin with the raw amino-acid sequence, 84 residues long: Small ribosomal subunit protein uS17 (84 aa).

It belongs to the universal ribosomal protein uS17 family. Part of the 30S ribosomal subunit.

Functionally, one of the primary rRNA binding proteins, it binds specifically to the 5'-end of 16S ribosomal RNA. The sequence is that of Small ribosomal subunit protein uS17 from Porphyromonas gingivalis (strain ATCC 33277 / DSM 20709 / CIP 103683 / JCM 12257 / NCTC 11834 / 2561).